A 436-amino-acid chain; its full sequence is GTPase Der (436 aa).

2 consecutive EngA-type G domains span residues 4–167 and 176–351; these read PVIA…PKIE and IRFS…ESHS. GTP is bound by residues 10–17, 57–61, 119–122, 182–189, 229–233, and 294–297; these read GRPNVGKS, DTGGI, NKVD, DTAGM, and NKWD. The KH-like domain maps to 352-436; it reads IRVQTNVLND…PIHIIARARD (85 aa).

Belongs to the TRAFAC class TrmE-Era-EngA-EngB-Septin-like GTPase superfamily. EngA (Der) GTPase family. As to quaternary structure, associates with the 50S ribosomal subunit.

In terms of biological role, GTPase that plays an essential role in the late steps of ribosome biogenesis. The chain is GTPase Der from Bacillus cereus (strain G9842).